Reading from the N-terminus, the 537-residue chain is MEISTALMILSAITAYFLWLTFISRCLKGPRVWPILGSLPGLIENCERMHDWISDNLRACSGTYQTCICAIPFLAKKQGLVTVTCDPRNLEHILKNRFDNYPKGPTWQAVFHDLLGQGIFNSDGDTWLFQRKTAALEFTTRTLRQAMARWVNRAIKLRFLPILENARLGSEPIDLQDLLLRLTFDNICGLTFGKDPRTCAPGLPVNTFAVAFDRATEASLQRFILPEILWKFKRWLRLGLEVSLTRSLVQVDNYLSEIITTRKEEMMTQHNNGKHHDDLLSRFIKKKESYSDETLQRVALNFILAGRDTSSVALSWFFWLITQHPAIEDKILREICTVLVETRGDDVALWTDEPLSCEELDRLVFLKAALSETLRLYPSVPEDSKRAVKDDVLPDGTFVPAGSSITYSIYSAGRMKSTWGEDCLEFKPERWISQSDGGRFINHDPFKFVAFNAGPRICLGKDLAYLQMKSIASAVLLRHRLTVVTGHKVEQKMSLTLFMKYGLLVNVHERDLTAIAADLRECKSNVVNDGVGNGVSS.

Residues I3–I23 traverse the membrane as a helical segment. Residue C458 coordinates heme.

This sequence belongs to the cytochrome P450 family. Heme is required as a cofactor. Expressed in leaves, stems, flowers and siliques. Expressed at low levels in roots.

It is found in the membrane. The catalysed reaction is an organic molecule + reduced [NADPH--hemoprotein reductase] + O2 = an alcohol + oxidized [NADPH--hemoprotein reductase] + H2O + H(+). Its function is as follows. Catalyzes the omega-hydroxylation of various fatty acids (FA). Acts on saturated and unsaturated fatty acids with chain lengths from C12 to C18. May be involved in the biosynthesis of cutin in the epidermis which prevents post-genital organ fusions. Hydroxylated FAs may be important for trichome differentiation, establishment of apical dominance and senescence. The polypeptide is Cytochrome P450 86A8 (CYP86A8) (Arabidopsis thaliana (Mouse-ear cress)).